Consider the following 280-residue polypeptide: Homeobox protein Hox-B1b (280 aa).

The disordered stretch occupies residues 46–65 (GRLAAPTSAPHQSPGLPLHH). The Antp-type hexapeptide motif lies at 170-175 (TFDWMK). A DNA-binding region (homeobox) is located at residues 195 to 254 (HNVIRTNFTTKQLTELEKEFHFNKYLTRARRVEVAASLELNETQVKIWFQNRRMKQKKRE). The segment at 249 to 280 (KQKKREKLGGVLVHREKASGPESSPKAKESEP) is disordered. Residues 261–280 (VHREKASGPESSPKAKESEP) show a composition bias toward basic and acidic residues.

It belongs to the Antp homeobox family. Labial subfamily.

The protein localises to the nucleus. In terms of biological role, sequence-specific transcription factor which is part of a developmental regulatory system that provides cells with specific positional identities on the anterior-posterior axis. The sequence is that of Homeobox protein Hox-B1b (hoxb1b) from Takifugu rubripes (Japanese pufferfish).